The primary structure comprises 264 residues: Thymidylate synthase (264 aa).

Arg-21 contributes to the dUMP binding site. Position 51 (His-51) interacts with (6R)-5,10-methylene-5,6,7,8-tetrahydrofolate. Position 126–127 (126–127 (RR)) interacts with dUMP. Residue Cys-146 is the Nucleophile of the active site. DUMP is bound by residues 166-169 (RSAD), Asn-177, and 207-209 (HIY). Asp-169 contributes to the (6R)-5,10-methylene-5,6,7,8-tetrahydrofolate binding site. Ser-263 is a (6R)-5,10-methylene-5,6,7,8-tetrahydrofolate binding site.

Belongs to the thymidylate synthase family. Bacterial-type ThyA subfamily. As to quaternary structure, homodimer.

The protein resides in the cytoplasm. It carries out the reaction dUMP + (6R)-5,10-methylene-5,6,7,8-tetrahydrofolate = 7,8-dihydrofolate + dTMP. The protein operates within pyrimidine metabolism; dTTP biosynthesis. In terms of biological role, catalyzes the reductive methylation of 2'-deoxyuridine-5'-monophosphate (dUMP) to 2'-deoxythymidine-5'-monophosphate (dTMP) while utilizing 5,10-methylenetetrahydrofolate (mTHF) as the methyl donor and reductant in the reaction, yielding dihydrofolate (DHF) as a by-product. This enzymatic reaction provides an intracellular de novo source of dTMP, an essential precursor for DNA biosynthesis. The sequence is that of Thymidylate synthase from Halalkalibacterium halodurans (strain ATCC BAA-125 / DSM 18197 / FERM 7344 / JCM 9153 / C-125) (Bacillus halodurans).